Here is a 59-residue protein sequence, read N- to C-terminus: Large ribosomal subunit protein uL30 (59 aa).

The protein belongs to the universal ribosomal protein uL30 family. Part of the 50S ribosomal subunit.

This chain is Large ribosomal subunit protein uL30, found in Alteromonas mediterranea (strain DSM 17117 / CIP 110805 / LMG 28347 / Deep ecotype).